A 341-amino-acid polypeptide reads, in one-letter code: Fe-S cluster assembly protein DRE2 (341 aa).

The segment at 1-157 (MNTLLLLHPT…FKKLSSPPTL (157 aa)) is N-terminal SAM-like domain. A disordered region spans residues 151 to 171 (LSSPPTLTDSSEADEDEESQL). The tract at residues 157–204 (LTDSSEADEDEESQLNEKLKGSKLIYFDESSDDEIIDEDELLRDDDGA) is linker. Residues 161–170 (SEADEDEESQ) show a composition bias toward acidic residues. The [2Fe-2S] cluster site is built by cysteine 215, cysteine 227, cysteine 230, and cysteine 232. Residues 215–232 (CALPNGKRRKKACKDCTC) are fe-S binding site A. Residues cysteine 304, cysteine 307, cysteine 315, and cysteine 318 each coordinate [4Fe-4S] cluster. 2 consecutive short sequence motifs (cx2C motif) follow at residues 304-307 (CGSC) and 315-318 (CDGC). The segment at 304–318 (CGSCALGDAFRCDGC) is fe-S binding site B.

It belongs to the anamorsin family. Monomer. Interacts with TAH18. Interacts with MIA40. [2Fe-2S] cluster is required as a cofactor. It depends on [4Fe-4S] cluster as a cofactor.

Its subcellular location is the cytoplasm. The protein localises to the mitochondrion intermembrane space. Its function is as follows. Component of the cytosolic iron-sulfur (Fe-S) protein assembly (CIA) machinery required for the maturation of extramitochondrial Fe-S proteins. Part of an electron transfer chain functioning in an early step of cytosolic Fe-S biogenesis, facilitating the de novo assembly of a [4Fe-4S] cluster on the scaffold complex CFD1-NBP35. Electrons are transferred to DRE2 from NADPH via the FAD- and FMN-containing protein TAH18. TAH18-DRE2 are also required for the assembly of the diferric tyrosyl radical cofactor of ribonucleotide reductase (RNR), probably by providing electrons for reduction during radical cofactor maturation in the catalytic small subunit RNR2. The polypeptide is Fe-S cluster assembly protein DRE2 (Komagataella phaffii (strain GS115 / ATCC 20864) (Yeast)).